The chain runs to 124 residues: Small ribosomal subunit protein uS12 (124 aa).

Position 89 is a 3-methylthioaspartic acid (Asp89). The interval 105–124 is disordered; the sequence is AGVKDRKKGRSKYGAKRPKA. A compositionally biased stretch (basic residues) spans 109-124; the sequence is DRKKGRSKYGAKRPKA.

This sequence belongs to the universal ribosomal protein uS12 family. As to quaternary structure, part of the 30S ribosomal subunit. Contacts proteins S8 and S17. May interact with IF1 in the 30S initiation complex.

In terms of biological role, with S4 and S5 plays an important role in translational accuracy. Its function is as follows. Interacts with and stabilizes bases of the 16S rRNA that are involved in tRNA selection in the A site and with the mRNA backbone. Located at the interface of the 30S and 50S subunits, it traverses the body of the 30S subunit contacting proteins on the other side and probably holding the rRNA structure together. The combined cluster of proteins S8, S12 and S17 appears to hold together the shoulder and platform of the 30S subunit. The polypeptide is Small ribosomal subunit protein uS12 (Dichelobacter nodosus (strain VCS1703A)).